A 443-amino-acid chain; its full sequence is Phosphoglucosamine mutase (443 aa).

Residue Ser100 is the Phosphoserine intermediate of the active site. 4 residues coordinate Mg(2+): Ser100, Asp239, Asp241, and Asp243. A Phosphoserine modification is found at Ser100.

It belongs to the phosphohexose mutase family. Mg(2+) is required as a cofactor. In terms of processing, activated by phosphorylation.

The catalysed reaction is alpha-D-glucosamine 1-phosphate = D-glucosamine 6-phosphate. Its function is as follows. Catalyzes the conversion of glucosamine-6-phosphate to glucosamine-1-phosphate. This chain is Phosphoglucosamine mutase, found in Shewanella loihica (strain ATCC BAA-1088 / PV-4).